The chain runs to 234 residues: Leucyl/phenylalanyl-tRNA--protein transferase (234 aa).

The protein belongs to the L/F-transferase family.

It is found in the cytoplasm. The catalysed reaction is N-terminal L-lysyl-[protein] + L-leucyl-tRNA(Leu) = N-terminal L-leucyl-L-lysyl-[protein] + tRNA(Leu) + H(+). It catalyses the reaction N-terminal L-arginyl-[protein] + L-leucyl-tRNA(Leu) = N-terminal L-leucyl-L-arginyl-[protein] + tRNA(Leu) + H(+). The enzyme catalyses L-phenylalanyl-tRNA(Phe) + an N-terminal L-alpha-aminoacyl-[protein] = an N-terminal L-phenylalanyl-L-alpha-aminoacyl-[protein] + tRNA(Phe). Functions in the N-end rule pathway of protein degradation where it conjugates Leu, Phe and, less efficiently, Met from aminoacyl-tRNAs to the N-termini of proteins containing an N-terminal arginine or lysine. The protein is Leucyl/phenylalanyl-tRNA--protein transferase of Klebsiella pneumoniae (strain 342).